The following is a 140-amino-acid chain: MKITNVRINQLVGEGKVKALVSVVFDGVLTVTDLKVVEGSKGLFVSMPSRKNKDGKFRDVVYPCTAEMRQAIQNAVLGAYDAMTRSGVAPQAGGLQGAEEPTAVEPAPQLQDESELPWEPGDDGEGARELAAVAGAVAAD.

The disordered stretch occupies residues 88 to 127 (VAPQAGGLQGAEEPTAVEPAPQLQDESELPWEPGDDGEGA). Over residues 112–124 (DESELPWEPGDDG) the composition is skewed to acidic residues.

Belongs to the SpoVG family.

In terms of biological role, could be involved in septation. The sequence is that of Putative septation protein SpoVG from Symbiobacterium thermophilum (strain DSM 24528 / JCM 14929 / IAM 14863 / T).